The following is a 298-amino-acid chain: D-alanine--D-alanine ligase (298 aa).

Positions 97 to 290 (FYSLFKNYIQ…FDELINIIIK (194 aa)) constitute an ATP-grasp domain. 124-173 (PFIIKPRKSGSSKGVYIIHNENEYKFYLEKDLKEFQEVLVQEYIKGREIT) lines the ATP pocket. Asp245, Glu257, and Asn259 together coordinate Mg(2+).

Belongs to the D-alanine--D-alanine ligase family. Mg(2+) is required as a cofactor. Mn(2+) serves as cofactor.

The protein localises to the cytoplasm. The catalysed reaction is 2 D-alanine + ATP = D-alanyl-D-alanine + ADP + phosphate + H(+). Its pathway is cell wall biogenesis; peptidoglycan biosynthesis. Functionally, cell wall formation. The sequence is that of D-alanine--D-alanine ligase from Petrotoga mobilis (strain DSM 10674 / SJ95).